Here is an 88-residue protein sequence, read N- to C-terminus: LYR motif-containing protein 2 (88 aa).

The N-terminal 19 residues, 1–19 (MAASRLPPAALTLKQFMRR), are a transit peptide targeting the mitochondrion.

The protein belongs to the complex I LYR family.

It localises to the mitochondrion. Involved in efficient integration of the N-module into mitochondrial respiratory chain complex I. The chain is LYR motif-containing protein 2 (Lyrm2) from Mus musculus (Mouse).